Reading from the N-terminus, the 401-residue chain is NADH-quinone oxidoreductase subunit D (401 aa).

This sequence belongs to the complex I 49 kDa subunit family. NDH-1 is composed of 14 different subunits. Subunits NuoB, C, D, E, F, and G constitute the peripheral sector of the complex.

It localises to the cell inner membrane. The catalysed reaction is a quinone + NADH + 5 H(+)(in) = a quinol + NAD(+) + 4 H(+)(out). Its function is as follows. NDH-1 shuttles electrons from NADH, via FMN and iron-sulfur (Fe-S) centers, to quinones in the respiratory chain. The immediate electron acceptor for the enzyme in this species is believed to be ubiquinone. Couples the redox reaction to proton translocation (for every two electrons transferred, four hydrogen ions are translocated across the cytoplasmic membrane), and thus conserves the redox energy in a proton gradient. This Rhodopseudomonas palustris (strain HaA2) protein is NADH-quinone oxidoreductase subunit D.